The primary structure comprises 315 residues: Olfactory receptor 5AN6 (315 aa).

At 1-29 (MPGGRNSTVITKFILVGFSDFPKLKLVLF) the chain is on the extracellular side. Residues 30–50 (VIFLGSYLSTVVWNLGLIILI) traverse the membrane as a helical segment. Topologically, residues 51–54 (RIDP) are cytoplasmic. A helical membrane pass occupies residues 55 to 75 (YLHTPMYFFLSNLSFLDFCYI). Residues 76 to 99 (SSTTPKMLSGFFQKSKSISFVGCT) lie on the Extracellular side of the membrane. Residues Cys-98 and Cys-180 are joined by a disulfide bond. A helical transmembrane segment spans residues 100–120 (MQYFIFSSLGLSECCLLAAMA). The Cytoplasmic segment spans residues 121-123 (YDR). Residues 124 to 143 (YAAICNPLLYTAIMSPSLCV) form a helical membrane-spanning segment. Position 144 (His-144) is a topological domain, extracellular. Residues 145-165 (MVVGAYSTGLLGSLIQLCAIL) traverse the membrane as a helical segment. Topologically, residues 166–202 (QLHFCGPNIINHFFCDLPQLLVLSCSETFPLQVLKFV) are cytoplasmic. Residues 203–223 (IAVIFGVASVIVILISYGYII) traverse the membrane as a helical segment. Residues 224 to 240 (GTILNISSVEGRSKAFN) are Extracellular-facing. The helical transmembrane segment at 241–261 (TCASHLTAVTLFFGSGLFVYM) threads the bilayer. Residues 262 to 272 (RPSSNSSQGYD) lie on the Cytoplasmic side of the membrane. Residues 273–293 (KMASVFYTVVIPMLNPLIYSL) traverse the membrane as a helical segment. Residues 294 to 315 (RNKEIKDALQRCKNKCFSQCHC) are Extracellular-facing.

The protein belongs to the G-protein coupled receptor 1 family. As to expression, localized in the dorsomedial and ventral region of the olfactory bulb.

The protein localises to the cell membrane. Odorant receptor specific for muscone. Muscone-binding causes a conformation change that triggers signaling via G(s)-class of G alpha protein GNAL, activating adenylyl cyclase. In Mus musculus (Mouse), this protein is Olfactory receptor 5AN6.